We begin with the raw amino-acid sequence, 390 residues long: 1-deoxy-D-xylulose 5-phosphate reductoisomerase (390 aa).

Residues Thr10, Gly11, Ser12, Val13, Gly38, Asn40, and Asn123 each contribute to the NADPH site. Lys124 contributes to the 1-deoxy-D-xylulose 5-phosphate binding site. NADPH is bound at residue Glu125. Asp149 is a Mn(2+) binding site. 1-deoxy-D-xylulose 5-phosphate-binding residues include Ser150, Glu151, Ser175, and His198. Glu151 contributes to the Mn(2+) binding site. Gly204 serves as a coordination point for NADPH. 1-deoxy-D-xylulose 5-phosphate is bound by residues Ser211, Asn216, Lys217, and Glu220. Mn(2+) is bound at residue Glu220.

This sequence belongs to the DXR family. Mg(2+) serves as cofactor. Mn(2+) is required as a cofactor.

The catalysed reaction is 2-C-methyl-D-erythritol 4-phosphate + NADP(+) = 1-deoxy-D-xylulose 5-phosphate + NADPH + H(+). Its pathway is isoprenoid biosynthesis; isopentenyl diphosphate biosynthesis via DXP pathway; isopentenyl diphosphate from 1-deoxy-D-xylulose 5-phosphate: step 1/6. Its function is as follows. Catalyzes the NADPH-dependent rearrangement and reduction of 1-deoxy-D-xylulose-5-phosphate (DXP) to 2-C-methyl-D-erythritol 4-phosphate (MEP). In Paracoccus denitrificans (strain Pd 1222), this protein is 1-deoxy-D-xylulose 5-phosphate reductoisomerase.